The chain runs to 361 residues: Large ribosomal subunit protein uL3 (361 aa).

Residues 339–361 are disordered; that stretch reads RPPKKKPPVQRPQITYVSVESKQ. Residues 350-361 are compositionally biased toward polar residues; it reads PQITYVSVESKQ.

The protein belongs to the universal ribosomal protein uL3 family. In terms of assembly, part of the 50S ribosomal subunit. Forms a cluster with proteins L14 and L24e.

One of the primary rRNA binding proteins, it binds directly near the 3'-end of the 23S rRNA, where it nucleates assembly of the 50S subunit. The protein is Large ribosomal subunit protein uL3 of Pyrococcus abyssi (strain GE5 / Orsay).